Here is a 347-residue protein sequence, read N- to C-terminus: NADH-ubiquinone oxidoreductase chain 2 (347 aa).

The next 10 membrane-spanning stretches (helical) occupy residues 3–23 (PPIL…VMLS), 25–45 (HWLL…PILM), 66–86 (ASML…QWVI), 111–131 (FHFW…MILL), 149–169 (INTN…GWGG), 178–198 (IMAY…TYNP), 201–221 (MVLN…LFML), 237–257 (FPLI…LPPL), 274–294 (NMII…YFYL), and 325–345 (LLPP…MLSV).

Belongs to the complex I subunit 2 family. As to quaternary structure, core subunit of respiratory chain NADH dehydrogenase (Complex I) which is composed of 45 different subunits. Interacts with TMEM242.

Its subcellular location is the mitochondrion inner membrane. It catalyses the reaction a ubiquinone + NADH + 5 H(+)(in) = a ubiquinol + NAD(+) + 4 H(+)(out). Core subunit of the mitochondrial membrane respiratory chain NADH dehydrogenase (Complex I) which catalyzes electron transfer from NADH through the respiratory chain, using ubiquinone as an electron acceptor. Essential for the catalytic activity and assembly of complex I. In Canis lupus familiaris (Dog), this protein is NADH-ubiquinone oxidoreductase chain 2.